The chain runs to 438 residues: Serine hydroxymethyltransferase (438 aa).

Residues Leu-119 and 123–125 (GHL) contribute to the (6S)-5,6,7,8-tetrahydrofolate site. At Lys-228 the chain carries N6-(pyridoxal phosphate)lysine. 370–372 (SPF) contributes to the (6S)-5,6,7,8-tetrahydrofolate binding site.

This sequence belongs to the SHMT family. Homodimer. Pyridoxal 5'-phosphate is required as a cofactor.

It is found in the cytoplasm. It catalyses the reaction (6R)-5,10-methylene-5,6,7,8-tetrahydrofolate + glycine + H2O = (6S)-5,6,7,8-tetrahydrofolate + L-serine. Its pathway is one-carbon metabolism; tetrahydrofolate interconversion. It functions in the pathway amino-acid biosynthesis; glycine biosynthesis; glycine from L-serine: step 1/1. In terms of biological role, catalyzes the reversible interconversion of serine and glycine with tetrahydrofolate (THF) serving as the one-carbon carrier. This reaction serves as the major source of one-carbon groups required for the biosynthesis of purines, thymidylate, methionine, and other important biomolecules. Also exhibits THF-independent aldolase activity toward beta-hydroxyamino acids, producing glycine and aldehydes, via a retro-aldol mechanism. The chain is Serine hydroxymethyltransferase from Chlorobium chlorochromatii (strain CaD3).